A 373-amino-acid polypeptide reads, in one-letter code: Probable pectin lyase C (373 aa).

An N-terminal signal peptide occupies residues 1-18 (MKVPFLQLLCLNAALASA). Cystine bridges form between Cys81–Cys100 and Cys90–Cys220. Asn123 carries N-linked (GlcNAc...) asparagine glycosylation. Arg250 is a catalytic residue. The cysteines at positions 316 and 324 are disulfide-linked.

Belongs to the polysaccharide lyase 1 family.

It is found in the secreted. It catalyses the reaction Eliminative cleavage of (1-&gt;4)-alpha-D-galacturonan methyl ester to give oligosaccharides with 4-deoxy-6-O-methyl-alpha-D-galact-4-enuronosyl groups at their non-reducing ends.. In terms of biological role, pectinolytic enzymes consist of four classes of enzymes: pectin lyase, polygalacturonase, pectin methylesterase and rhamnogalacturonase. Among pectinolytic enzymes, pectin lyase is the most important in depolymerization of pectin, since it cleaves internal glycosidic bonds of highly methylated pectins. This Aspergillus niger (strain ATCC MYA-4892 / CBS 513.88 / FGSC A1513) protein is Probable pectin lyase C (pelC).